The sequence spans 390 residues: Complement decay-accelerating factor, GPI-anchored (390 aa).

The signal sequence occupies residues 1–34; that stretch reads MIRGRAPRTRPSPPPPLLPLLSLSLLLLSPTVRG. Sushi domains are found at residues 35-96, 97-160, 161-222, and 223-286; these read DCGP…FCEK, SCVA…FCKK, KSCP…VCTE, and IHCP…RCIE. 8 cysteine pairs are disulfide-bonded: Cys-36–Cys-81, Cys-65–Cys-94, Cys-98–Cys-145, Cys-129–Cys-158, Cys-163–Cys-204, Cys-190–Cys-220, Cys-225–Cys-267, and Cys-253–Cys-284. Residue Asn-187 is glycosylated (N-linked (GlcNAc...) asparagine). Asn-262 carries N-linked (GlcNAc...) asparagine glycosylation. The segment at 273–362 is disordered; sequence DVGQWSSPPP…STDKGEPNTG (90 aa). Composition is skewed to polar residues over residues 298–319 and 327–344; these read NVPS…VPNP and KPST…VTKT. Gly-362 carries the GPI-anchor amidated glycine lipid modification. The propeptide at 363 to 390 is removed in mature form; that stretch reads GDRYIYGHTCLITLTVLHVMLSLIGYLT.

The protein belongs to the receptors of complement activation (RCA) family. Brain, secretory epithelia, skeletal muscle, liver, testes, thymus, spleen and lymph node.

It localises to the cell membrane. Its function is as follows. This protein recognizes C4b and C3b fragments that condense with cell-surface hydroxyl or amino groups when nascent C4b and C3b are locally generated during C4 and c3 activation. Interaction of daf with cell-associated C4b and C3b polypeptides interferes with their ability to catalyze the conversion of C2 and factor B to enzymatically active C2a and Bb and thereby prevents the formation of C4b2a and C3bBb, the amplification convertases of the complement cascade. Inhibits complement activation by destabilizing and preventing the formation of C3 and C5 convertases, which prevents complement damage. This is Complement decay-accelerating factor, GPI-anchored (Cd55) from Mus musculus (Mouse).